The sequence spans 503 residues: Maturase K (503 aa).

It belongs to the intron maturase 2 family. MatK subfamily.

The protein resides in the plastid. Its subcellular location is the chloroplast. Usually encoded in the trnK tRNA gene intron. Probably assists in splicing its own and other chloroplast group II introns. The sequence is that of Maturase K from Thryptomene saxicola (Rock thryptomene).